The sequence spans 87 residues: Acyl-CoA-binding protein (87 aa).

An N-acetylserine modification is found at Ser2. An ACB domain is found at 2-87 (SQADFDKAAE…VEELKKKYGI (86 aa)). Residue Lys8 is modified to N6-acetyllysine; alternate. Lys8 bears the N6-succinyllysine; alternate mark. Lys14 serves as a coordination point for an acyl-CoA. N6-succinyllysine is present on Lys17. Position 29 is a phosphotyrosine (Tyr29). Residues 29 to 33 (YSHFK), Lys51, Lys55, and Tyr74 contribute to the an acyl-CoA site. Lys51 is modified (N6-acetyllysine). N6-acetyllysine; alternate is present on Lys55. An N6-succinyllysine; alternate modification is found at Lys55. An N6-(2-hydroxyisobutyryl)lysine; alternate modification is found at Lys55. Residue Lys55 is modified to N6-malonyllysine; alternate. Lys77 is modified (N6-acetyllysine; alternate). An N6-succinyllysine; alternate modification is found at Lys77.

This sequence belongs to the ACBP family. Monomer.

The protein localises to the endoplasmic reticulum. Its subcellular location is the golgi apparatus. In terms of biological role, binds medium- and long-chain acyl-CoA esters with very high affinity and may function as an intracellular carrier of acyl-CoA esters. It is also able to displace diazepam from the benzodiazepine (BZD) recognition site located on the GABA type A receptor. It is therefore possible that this protein also acts as a neuropeptide to modulate the action of the GABA receptor. The chain is Acyl-CoA-binding protein (Dbi) from Rattus norvegicus (Rat).